The primary structure comprises 809 residues: Integrin beta pat-3 (809 aa).

The N-terminal stretch at 1–19 (MPPSTSLLLLAALLPFALP) is a signal peptide. At 20–737 (ASDWKTGEVT…KHKDCPPPVP (718 aa)) the chain is on the extracellular side. Residues Asn47, Asn141, Asn269, Asn373, and Asn400 are each glycosylated (N-linked (GlcNAc...) asparagine). One can recognise a VWFA domain in the interval 153–352 (DLYYLMDLSY…IFAVTKNNQD (200 aa)). Cystine bridges form between Cys476-Cys496, Cys489-Cys499, Cys501-Cys510, Cys512-Cys543, Cys526-Cys541, Cys535-Cys546, Cys548-Cys563, Cys565-Cys586, Cys570-Cys584, Cys578-Cys589, Cys591-Cys600, Cys602-Cys625, Cys609-Cys623, Cys617-Cys628, and Cys630-Cys644. 4 I-EGF domains span residues 476–511 (CERQ…KYCE), 512–564 (CNRP…EFCE), 565–601 (CDNF…RACE), and 602–645 (CPIS…AKCE). Asn530 carries an N-linked (GlcNAc...) asparagine glycan. Asn672, Asn693, and Asn721 each carry an N-linked (GlcNAc...) asparagine glycan. A helical membrane pass occupies residues 738-758 (VLAIVLGVIAGIVILGILLLL). The Cytoplasmic portion of the chain corresponds to 759–809 (LWKLLTVLHDRSEYATFNNERLMAKWDTNENPIYKQATTTFKNPVYAGKAN). Tyr792 bears the Phosphotyrosine mark.

This sequence belongs to the integrin beta chain family. In terms of assembly, heterodimer of an alpha and a beta subunit. Interacts with alpha subunit ina-1. Interacts with alpha subunit pat-2. Component of an integrin containing attachment complex, composed of at least pat-2, pat-3, pat-4, pat-6, unc-52, unc-97 and unc-112. May interact with tns-1 (via C-terminus). Post-translationally, phosphorylated. Dephosphorylated by dep-1. As to expression, expressed in body wall muscles (at protein level). Expressed in gonadal sheath cells and spermatheca. Expressed in vulval cells and along the basal laminae that separate the vulval cells from the uterus (at the protein level).

It localises to the cell membrane. The protein localises to the lateral cell membrane. The protein resides in the basolateral cell membrane. Its subcellular location is the cytoplasm. It is found in the myofibril. It localises to the sarcomere. The protein localises to the m line. The protein resides in the cell junction. Its subcellular location is the focal adhesion. Its function is as follows. Integrin alpha ina-1/beta pat-3 is a receptor for laminin. Integrin alpha pat-2/beta pat-3 recognizes the sequence R-G-D in its ligands. Plays a role in cell migration, morphogenesis and probably in cell-cell interactions. During gonad morphogenesis, involved in distal tip cell (DTC)-mediated guidance of gonad elongation, in maintaining their sharp tapering morphology and in their migration. Component of an integrin containing attachment complex, which is required for muscle development and maintenance. Involved in the assembly of dense bodies and M lines during body wall muscle embryonic development by recruiting one of their components, cpna-1, to integrin-mediated attachment sites. May play a similar role in the assembly of dense bodies in gonadal myoepithelial sheath cells. Probably by acting as a receptor for apoptotic cells, plays a role in the clearance of apoptotic cells during mid-embryogenesis. Required for ovulation. Dephosphorylated, probably within the alpha pat-2/beta pat-3 integrin receptor complex, by the phosphatase dep-1, which leads to down-stream effects including the negative regulation of let-23 signaling and vulval induction. When unphosphosphorylated, recruits the cytoplasmic adapter protein tln-1 to the plasma membrane of secondary vulval precursor cells. This promotes the linking of focal adhesion sites to the F-actin cytoskeleton, and it also acts to restrict the mobility of the let-23 receptor on the plasma membrane of vulval cells which thereby attenuates let-23 signaling. Plays a role in axon regeneration after injury. The protein is Integrin beta pat-3 of Caenorhabditis elegans.